The following is a 537-amino-acid chain: Tyrosine-protein kinase Fyn (537 aa).

Residue Gly2 is the site of N-myristoyl glycine attachment. S-palmitoyl cysteine attachment occurs at residues Cys3 and Cys6. Phosphothreonine; by PKC is present on Thr12. The interval 14-35 is disordered; sequence LTEERDGSLNQSSGYRYGTDPT. Phosphoserine occurs at positions 21 and 26. Positions 82–143 constitute an SH3 domain; that stretch reads TGVTLFVALY…PSNYVAPVDS (62 aa). The SH2 domain maps to 149-246; sequence WYFGKLGRKD…GLCCRLVVPC (98 aa). Tyr185 is subject to Phosphotyrosine. Residues 271–524 form the Protein kinase domain; sequence LQLIKRLGNG…YLQSFLEDYF (254 aa). Residues 277-285 and Lys299 contribute to the ATP site; that span reads LGNGQFGEV. Asp390 (proton acceptor) is an active-site residue. Tyr420 carries the post-translational modification Phosphotyrosine; by autocatalysis. Position 531 is a phosphotyrosine; by CSK (Tyr531).

This sequence belongs to the protein kinase superfamily. Tyr protein kinase family. SRC subfamily. Interacts (via its SH3 domain) with PIK3R1 and PRMT8. Interacts with FYB1, PAG1, and SH2D1A. Interacts with CD79A (tyrosine-phosphorylated form); the interaction increases FYN activity. Interacts (via SH2 domain) with CSF1R (tyrosine phosphorylated). Interacts with TOM1L1 (phosphorylated form). Interacts with KDR (tyrosine phosphorylated). Interacts (via SH3 domain) with KLHL2 (via N-terminus). Interacts with SH2D1A and SLAMF1. Interacts with ITCH; the interaction phosphorylates ITCH and negatively regulates its activity. Interacts with FASLG. Interacts with RUNX3. Interacts with KIT. Interacts with EPHA8; possible downstream effector of EPHA8 in regulation of cell adhesion. Interacts with PTK2/FAK1; this interaction leads to PTK2/FAK1 phosphorylation and activation. Interacts with CAV1; this interaction couples integrins to the Ras-ERK pathway. Interacts with UNC119. Interacts (via SH2 domain) with PTPRH (phosphorylated form). Interacts with PTPRO (phosphorylated form). Interacts with PTPRB (phosphorylated form). Interacts with FYB2. Interacts with DSCAM. Interacts with SKAP1 and FYB1; this interaction promotes the phosphorylation of CLNK. Interacts with NEDD9; in the presence of PTK2. As to quaternary structure, (Microbial infection) Interacts (via its SH3 domain) with hepatitis E virus/HEV protein ORF3. Mn(2+) serves as cofactor. Post-translationally, autophosphorylated at Tyr-420. Phosphorylation on the C-terminal tail at Tyr-531 by CSK maintains the enzyme in an inactive state. PTPRC/CD45 dephosphorylates Tyr-531 leading to activation. Ultraviolet B (UVB) strongly increase phosphorylation at Thr-12 and kinase activity, and promotes translocation from the cytoplasm to the nucleus. Dephosphorylation at Tyr-420 by PTPN2 negatively regulates T-cell receptor signaling. Phosphorylated at tyrosine residues, which can be enhanced by NTN1. Palmitoylated. Palmitoylation at Cys-3 and Cys-6, probably by ZDHHC21, regulates subcellular location. As to expression, isoform 1 is highly expressed in the brain. Isoform 2 is expressed in cells of hemopoietic lineages, especially T-lymphocytes.

Its subcellular location is the cytoplasm. The protein localises to the nucleus. The protein resides in the cell membrane. It is found in the perikaryon. The enzyme catalyses L-tyrosyl-[protein] + ATP = O-phospho-L-tyrosyl-[protein] + ADP + H(+). Its activity is regulated as follows. Inhibited by phosphorylation of Tyr-531 by leukocyte common antigen and activated by dephosphorylation of this site. Non-receptor tyrosine-protein kinase that plays a role in many biological processes including regulation of cell growth and survival, cell adhesion, integrin-mediated signaling, cytoskeletal remodeling, cell motility, immune response and axon guidance. Inactive FYN is phosphorylated on its C-terminal tail within the catalytic domain. Following activation by PKA, the protein subsequently associates with PTK2/FAK1, allowing PTK2/FAK1 phosphorylation, activation and targeting to focal adhesions. Involved in the regulation of cell adhesion and motility through phosphorylation of CTNNB1 (beta-catenin) and CTNND1 (delta-catenin). Regulates cytoskeletal remodeling by phosphorylating several proteins including the actin regulator WAS and the microtubule-associated proteins MAP2 and MAPT. Promotes cell survival by phosphorylating AGAP2/PIKE-A and preventing its apoptotic cleavage. Participates in signal transduction pathways that regulate the integrity of the glomerular slit diaphragm (an essential part of the glomerular filter of the kidney) by phosphorylating several slit diaphragm components including NPHS1, KIRREL1 and TRPC6. Plays a role in neural processes by phosphorylating DPYSL2, a multifunctional adapter protein within the central nervous system, ARHGAP32, a regulator for Rho family GTPases implicated in various neural functions, and SNCA, a small pre-synaptic protein. Involved in reelin signaling by mediating phosphorylation of DAB1 following reelin (RELN)-binding to its receptor. Participates in the downstream signaling pathways that lead to T-cell differentiation and proliferation following T-cell receptor (TCR) stimulation. Phosphorylates PTK2B/PYK2 in response to T-cell receptor activation. Also participates in negative feedback regulation of TCR signaling through phosphorylation of PAG1, thereby promoting interaction between PAG1 and CSK and recruitment of CSK to lipid rafts. CSK maintains LCK and FYN in an inactive form. Promotes CD28-induced phosphorylation of VAV1. In mast cells, phosphorylates CLNK after activation of immunoglobulin epsilon receptor signaling. Can also promote CD244-mediated NK cell activation. The polypeptide is Tyrosine-protein kinase Fyn (FYN) (Homo sapiens (Human)).